A 183-amino-acid polypeptide reads, in one-letter code: ATP synthase subunit delta, chloroplastic (183 aa).

It belongs to the ATPase delta chain family. As to quaternary structure, F-type ATPases have 2 components, F(1) - the catalytic core - and F(0) - the membrane proton channel. F(1) has five subunits: alpha(3), beta(3), gamma(1), delta(1), epsilon(1). CF(0) has four main subunits: a(1), b(1), b'(1) and c(10-14). The alpha and beta chains form an alternating ring which encloses part of the gamma chain. F(1) is attached to F(0) by a central stalk formed by the gamma and epsilon chains, while a peripheral stalk is formed by the delta, b and b' chains.

It is found in the plastid. The protein localises to the chloroplast thylakoid membrane. Its function is as follows. F(1)F(0) ATP synthase produces ATP from ADP in the presence of a proton or sodium gradient. F-type ATPases consist of two structural domains, F(1) containing the extramembraneous catalytic core and F(0) containing the membrane proton channel, linked together by a central stalk and a peripheral stalk. During catalysis, ATP synthesis in the catalytic domain of F(1) is coupled via a rotary mechanism of the central stalk subunits to proton translocation. This protein is part of the stalk that links CF(0) to CF(1). It either transmits conformational changes from CF(0) to CF(1) or is implicated in proton conduction. The polypeptide is ATP synthase subunit delta, chloroplastic (Cyanidium caldarium (Red alga)).